The primary structure comprises 250 residues: Transmembrane protein 106C (250 aa).

The interval 1–25 is disordered; the sequence is MGSQHSAAARPSSCRRKQEDDRDGL. A lipid anchor (N-myristoyl glycine) is attached at glycine 2. A compositionally biased stretch (basic and acidic residues) spans 16–25; that stretch reads RKQEDDRDGL. Residues 87-107 traverse the membrane as a helical segment; it reads YVLLSILLCLLASGLVVFFLF. 2 N-linked (GlcNAc...) asparagine glycosylation sites follow: asparagine 173 and asparagine 186. A helical transmembrane segment spans residues 197–217; it reads FSYVYFFCTVPEILVHNIVIF.

This sequence belongs to the TMEM106 family. Interacts with TMEM106B.

The protein localises to the endoplasmic reticulum membrane. It localises to the membrane. In Homo sapiens (Human), this protein is Transmembrane protein 106C (TMEM106C).